Consider the following 113-residue polypeptide: Putative hemolysin E-like protein (113 aa).

The protein belongs to the hemolysin E family.

The protein is Putative hemolysin E-like protein of Shigella flexneri.